A 105-amino-acid chain; its full sequence is Small ribosomal subunit protein uS10 (105 aa).

The protein belongs to the universal ribosomal protein uS10 family. In terms of assembly, part of the 30S ribosomal subunit.

In terms of biological role, involved in the binding of tRNA to the ribosomes. This is Small ribosomal subunit protein uS10 from Gloeothece citriformis (strain PCC 7424) (Cyanothece sp. (strain PCC 7424)).